The following is a 308-amino-acid chain: UDP-N-acetylenolpyruvoylglucosamine reductase (308 aa).

In terms of domain architecture, FAD-binding PCMH-type spans V32–G196. R176 is a catalytic residue. S225 acts as the Proton donor in catalysis. Residue E296 is part of the active site.

The protein belongs to the MurB family. FAD is required as a cofactor.

The protein resides in the cytoplasm. The enzyme catalyses UDP-N-acetyl-alpha-D-muramate + NADP(+) = UDP-N-acetyl-3-O-(1-carboxyvinyl)-alpha-D-glucosamine + NADPH + H(+). Its pathway is cell wall biogenesis; peptidoglycan biosynthesis. In terms of biological role, cell wall formation. In Legionella pneumophila subsp. pneumophila (strain Philadelphia 1 / ATCC 33152 / DSM 7513), this protein is UDP-N-acetylenolpyruvoylglucosamine reductase.